Consider the following 143-residue polypeptide: Phosphoribosyl-AMP cyclohydrolase (143 aa).

D86 contributes to the Mg(2+) binding site. Residue C87 participates in Zn(2+) binding. Positions 88 and 90 each coordinate Mg(2+). Residues C103 and C110 each coordinate Zn(2+).

It belongs to the PRA-CH family. As to quaternary structure, homodimer. It depends on Mg(2+) as a cofactor. Requires Zn(2+) as cofactor.

It localises to the cytoplasm. The catalysed reaction is 1-(5-phospho-beta-D-ribosyl)-5'-AMP + H2O = 1-(5-phospho-beta-D-ribosyl)-5-[(5-phospho-beta-D-ribosylamino)methylideneamino]imidazole-4-carboxamide. It functions in the pathway amino-acid biosynthesis; L-histidine biosynthesis; L-histidine from 5-phospho-alpha-D-ribose 1-diphosphate: step 3/9. In terms of biological role, catalyzes the hydrolysis of the adenine ring of phosphoribosyl-AMP. The chain is Phosphoribosyl-AMP cyclohydrolase from Rhodospirillum rubrum (strain ATCC 11170 / ATH 1.1.1 / DSM 467 / LMG 4362 / NCIMB 8255 / S1).